The sequence spans 87 residues: MQIKREAVCGTLQSNDCLVRIVPSEKLELDLKSSVLNEFGAQIKKTVQEVLDEFEVKNAKLFIEDKGALDCTIKARVETALRRANEK.

An O-(phosphoribosyl dephospho-coenzyme A)serine modification is found at serine 14.

It belongs to the CitD family. As to quaternary structure, oligomer with a subunit composition of (alpha,beta,gamma)6.

The protein resides in the cytoplasm. Functionally, covalent carrier of the coenzyme of citrate lyase. This is Citrate lyase acyl carrier protein from Treponema denticola (strain ATCC 35405 / DSM 14222 / CIP 103919 / JCM 8153 / KCTC 15104).